We begin with the raw amino-acid sequence, 522 residues long: Na(+)/H(+) antiporter NhaB (522 aa).

The next 9 helical transmembrane spans lie at 13 to 33, 98 to 118, 140 to 160, 239 to 259, 304 to 324, 356 to 376, 390 to 410, 446 to 466, and 477 to 497; these read FLGN…IINP, LLLV…LFVF, AFLS…SVSV, FFIR…LVCL, AIIG…LVGL, LTVF…TPII, LFYL…VGTV, ATPN…APLI, and ALPY…FLLV.

It belongs to the NhaB Na(+)/H(+) (TC 2.A.34) antiporter family.

Its subcellular location is the cell inner membrane. It carries out the reaction 2 Na(+)(in) + 3 H(+)(out) = 2 Na(+)(out) + 3 H(+)(in). Functionally, na(+)/H(+) antiporter that extrudes sodium in exchange for external protons. This chain is Na(+)/H(+) antiporter NhaB, found in Yersinia pestis bv. Antiqua (strain Angola).